The primary structure comprises 364 residues: Homeobox protein KNOX3 (364 aa).

The disordered stretch occupies residues 13-49 (TAHGQHHSQLPWGSSPLSAVISPPPQQQQQHQQQSAG). Residues 19–29 (HSQLPWGSSPL) show a composition bias toward polar residues. Positions 246–266 (ELKHHLLKKYSGYLSSLKQEL) constitute an ELK domain. Residues 267-330 (SKKKKKGKLP…NQRKRHWKPT (64 aa)) constitute a DNA-binding region (homeobox; TALE-type).

The protein belongs to the TALE/KNOX homeobox family. In terms of assembly, binds DNA as a monomer. In terms of tissue distribution, the unit of inflorescence is the spikelet, which bears a fertile tract, the lemma, and the floret consisting of palea, two lodicules, three stamens and the pistil. The lemma is completed by the awn, an appendage homologous to the laminae of normal leaves. Expressed in the inflorescences and lemmas and at lower levels, in palea and vascular bundles.

Its subcellular location is the nucleus. Its function is as follows. May play a role in meristem formation and/or maintenance. Overexpression causes the hooded phenotype characterized by the appearance of an extra flower of inverse polarity on the lemma. Binds to the DNA sequence 5'-TGAC-3'. The chain is Homeobox protein KNOX3 (KNOX3) from Hordeum vulgare (Barley).